We begin with the raw amino-acid sequence, 243 residues long: uncharacterized protein (243 aa).

The signal sequence occupies residues 1–16 (MKLLALVALCAVGVAS). Asn55 carries N-linked (GlcNAc...) asparagine glycosylation. Disordered stretches follow at residues 95–126 (SQGR…EKPS) and 208–235 (NQQQ…KPTV). Low complexity-rich tracts occupy residues 99–112 (NQQQ…SQGG) and 209–229 (QQQQ…STTL). Cys141 and Cys239 are disulfide-bonded.

The protein belongs to the protease inhibitor I33 family.

It is found in the secreted. This is an uncharacterized protein from Caenorhabditis elegans.